Consider the following 412-residue polypeptide: Solute carrier family 22 member 18 (412 aa).

10 helical membrane-spanning segments follow: residues Gly16–Phe36, Val51–Phe71, Leu117–Ala137, Leu148–Thr168, Ala176–Val196, Phe232–Ile252, Ala264–Gly284, Ala294–Ser314, Val316–Val336, and Gly380–Trp400.

It belongs to the major facilitator (TC 2.A.1) superfamily. Organic cation transporter (TC 2.A.1.19) family.

It localises to the apical cell membrane. In terms of biological role, may act as a transporter of organic cations based on a proton efflux antiport mechanism. May play a role in the transport of chloroquine and quinidine-related compounds in kidney. Plays a role in the regulation of lipid metabolism. The protein is Solute carrier family 22 member 18 (Slc67a1) of Rattus norvegicus (Rat).